A 460-amino-acid polypeptide reads, in one-letter code: Cysteine--tRNA ligase (460 aa).

C28 lines the Zn(2+) pocket. Positions 30–40 (VTIYDLCHIGH) match the 'HIGH' region motif. C209, H234, and E238 together coordinate Zn(2+). The short motif at 266–270 (KMSKS) is the 'KMSKS' region element. ATP is bound at residue K269.

Belongs to the class-I aminoacyl-tRNA synthetase family. Monomer. It depends on Zn(2+) as a cofactor.

The protein resides in the cytoplasm. The catalysed reaction is tRNA(Cys) + L-cysteine + ATP = L-cysteinyl-tRNA(Cys) + AMP + diphosphate. This chain is Cysteine--tRNA ligase, found in Vibrio parahaemolyticus serotype O3:K6 (strain RIMD 2210633).